Reading from the N-terminus, the 114-residue chain is Type 4 adapter protein IcmS (114 aa).

The T4BSS is a complex nanomachine composed of several subcomplexes. This subunit is part of the Type IV Coupling Complex (T4CC), a subcomplex composed of the DotLMNYZ core and the IcmSW-LvgA adapter subunits, linked by the C-terminal tail of DotL. Interacts with IcmW. IcmS and IcmW form a stable complex. Interacts directly with the type 4 coupling protein DotL. Interacts with LvgA. Interacts with effector proteins.

The protein resides in the cytoplasm. Its activity is regulated as follows. Interaction with DotL is critical for the export of IcmSW-dependent substrates. Component of the Dot/Icm type IVB secretion system (T4BSS), which is used to inject bacterial effector proteins into eukaryotic host cells. Part of a subcomplex which recruits effector proteins and delivers them to the core transmembrane subcomplex. The IcmS/IcmW protein complex plays an important role in protein translocation by interacting with multiple Dot/Icm effector proteins to facilitate their translocation into host cells. Interaction promotes conformational changes in the effector protein, which may facilitate display of a C-terminal translocation signal. May maintain the substrates in a translocation competent form. Required for intracellular growth in host cells, replicative phagosome formation and phagosome trafficking. IcmS is required for IcmW stability. This is Type 4 adapter protein IcmS from Legionella pneumophila subsp. pneumophila (strain Philadelphia 1 / ATCC 33152 / DSM 7513).